The primary structure comprises 416 residues: Leu/Ile/Val-binding protein homolog 4 (416 aa).

A signal peptide spans 1–26 (MSLKVFLQAGVACAALSLAGAAGASA).

This sequence belongs to the leucine-binding protein family.

Functionally, component of an amino-acid transport system. The sequence is that of Leu/Ile/Val-binding protein homolog 4 from Brucella abortus (strain 2308).